We begin with the raw amino-acid sequence, 120 residues long: Large ribosomal subunit protein uL18 (120 aa).

It belongs to the universal ribosomal protein uL18 family. As to quaternary structure, part of the 50S ribosomal subunit; part of the 5S rRNA/L5/L18/L25 subcomplex. Contacts the 5S and 23S rRNAs.

This is one of the proteins that bind and probably mediate the attachment of the 5S RNA into the large ribosomal subunit, where it forms part of the central protuberance. The polypeptide is Large ribosomal subunit protein uL18 (Rhizobium etli (strain CIAT 652)).